A 155-amino-acid polypeptide reads, in one-letter code: Ribosomal RNA large subunit methyltransferase H (155 aa).

Residues L73, G104, and 123-128 (LSPLTL) contribute to the S-adenosyl-L-methionine site.

This sequence belongs to the RNA methyltransferase RlmH family. In terms of assembly, homodimer.

Its subcellular location is the cytoplasm. The enzyme catalyses pseudouridine(1915) in 23S rRNA + S-adenosyl-L-methionine = N(3)-methylpseudouridine(1915) in 23S rRNA + S-adenosyl-L-homocysteine + H(+). In terms of biological role, specifically methylates the pseudouridine at position 1915 (m3Psi1915) in 23S rRNA. This is Ribosomal RNA large subunit methyltransferase H from Pseudomonas aeruginosa (strain LESB58).